The sequence spans 470 residues: 3-isopropylmalate dehydratase large subunit (470 aa).

[4Fe-4S] cluster-binding residues include Cys-351, Cys-411, and Cys-414.

This sequence belongs to the aconitase/IPM isomerase family. LeuC type 1 subfamily. In terms of assembly, heterodimer of LeuC and LeuD. [4Fe-4S] cluster is required as a cofactor.

The enzyme catalyses (2R,3S)-3-isopropylmalate = (2S)-2-isopropylmalate. The protein operates within amino-acid biosynthesis; L-leucine biosynthesis; L-leucine from 3-methyl-2-oxobutanoate: step 2/4. Catalyzes the isomerization between 2-isopropylmalate and 3-isopropylmalate, via the formation of 2-isopropylmaleate. The polypeptide is 3-isopropylmalate dehydratase large subunit (Rhodopseudomonas palustris (strain HaA2)).